The primary structure comprises 604 residues: Aspartate--tRNA(Asp/Asn) ligase (604 aa).

Glutamate 175 serves as a coordination point for L-aspartate. The segment at 199–202 (QMFK) is aspartate. Residues arginine 221 and histidine 451 each contribute to the L-aspartate site. 221–223 (RDE) is a binding site for ATP. Residue glutamate 485 coordinates ATP. Arginine 492 is a binding site for L-aspartate. 537 to 540 (GIDR) contacts ATP.

The protein belongs to the class-II aminoacyl-tRNA synthetase family. Type 1 subfamily. As to quaternary structure, homodimer.

It localises to the cytoplasm. The catalysed reaction is tRNA(Asx) + L-aspartate + ATP = L-aspartyl-tRNA(Asx) + AMP + diphosphate. Aspartyl-tRNA synthetase with relaxed tRNA specificity since it is able to aspartylate not only its cognate tRNA(Asp) but also tRNA(Asn). Reaction proceeds in two steps: L-aspartate is first activated by ATP to form Asp-AMP and then transferred to the acceptor end of tRNA(Asp/Asn). The protein is Aspartate--tRNA(Asp/Asn) ligase of Erythrobacter litoralis (strain HTCC2594).